A 537-amino-acid chain; its full sequence is MTKYIFVTGGVVSGLGKGITSASIGLLMKARGYKTTNIKIDPYINYDAGTMNPYQHGEVFVLDDGGEVDLDLGNYERFLDTELTFDHNITTGKVYSTVIEKERRGEYLGATVQVIPHITDEIKRRIREIAKDYEVVVVEIGGTVGDIESMPFLEAARQMQLEEGRDNVAFVHVTYVPKLKVVGEQKTKPTQHSVKELRSLGIQPDAIVARSEDPLEEAARKKISLFTNVPEEAVISAYDVEDTYEVPLLLEREGLGKYLTKRLKLEDREPDLKDWEKMVAKYKALTETVEIAIVGKYVKLQDSYLSIKEALKHASVSNEVKVKIRWIEAEDVETHGTKLLEGVDGIIIPGGFGARGAEGKIQAIRYARENDIPFLGICFGFQLTVVEFARNVLGMKGAHSTEIDPQTPYPVVDLMPEQRNLDRLGGTMRLGAYPVKIKKGTLAYSLYNKELVYERHRHRWEVNPNYIEALEKAGLVFSGVAGDDERRMEILELPDKRYFIATQFHPEFKSRPMRPAPVFHGLVRAAKEYKQEKNVTH.

Residues 1 to 265 form an amidoligase domain region; the sequence is MTKYIFVTGG…GKYLTKRLKL (265 aa). CTP is bound at residue serine 13. Serine 13 contributes to the UTP binding site. 14–19 contributes to the ATP binding site; it reads GLGKGI. Tyrosine 54 lines the L-glutamine pocket. Aspartate 71 contacts ATP. Residues aspartate 71 and glutamate 139 each coordinate Mg(2+). CTP-binding positions include 146–148, 186–191, and lysine 222; these read DIE and KTKPTQ. UTP contacts are provided by residues 186 to 191 and lysine 222; that span reads KTKPTQ. Positions 290–532 constitute a Glutamine amidotransferase type-1 domain; the sequence is EIAIVGKYVK…VRAAKEYKQE (243 aa). Glycine 351 lines the L-glutamine pocket. Cysteine 378 serves as the catalytic Nucleophile; for glutamine hydrolysis. L-glutamine-binding positions include 379–382, glutamate 402, and arginine 459; that span reads FGFQ. Residues histidine 505 and glutamate 507 contribute to the active site.

Belongs to the CTP synthase family. As to quaternary structure, homotetramer.

The enzyme catalyses UTP + L-glutamine + ATP + H2O = CTP + L-glutamate + ADP + phosphate + 2 H(+). The catalysed reaction is L-glutamine + H2O = L-glutamate + NH4(+). It catalyses the reaction UTP + NH4(+) + ATP = CTP + ADP + phosphate + 2 H(+). Its pathway is pyrimidine metabolism; CTP biosynthesis via de novo pathway; CTP from UDP: step 2/2. Allosterically activated by GTP, when glutamine is the substrate; GTP has no effect on the reaction when ammonia is the substrate. The allosteric effector GTP functions by stabilizing the protein conformation that binds the tetrahedral intermediate(s) formed during glutamine hydrolysis. Inhibited by the product CTP, via allosteric rather than competitive inhibition. Its function is as follows. Catalyzes the ATP-dependent amination of UTP to CTP with either L-glutamine or ammonia as the source of nitrogen. Regulates intracellular CTP levels through interactions with the four ribonucleotide triphosphates. The sequence is that of CTP synthase from Pyrococcus furiosus (strain ATCC 43587 / DSM 3638 / JCM 8422 / Vc1).